Reading from the N-terminus, the 131-residue chain is Small ribosomal subunit protein bS16 (131 aa).

The segment at 87-131 (PGAEGTYRVPTANTKPPRIPGGGAAKAVEAPAEAPAEAETPASES) is disordered. Residues 111 to 131 (AKAVEAPAEAPAEAETPASES) are compositionally biased toward low complexity.

Belongs to the bacterial ribosomal protein bS16 family.

The protein is Small ribosomal subunit protein bS16 of Kineococcus radiotolerans (strain ATCC BAA-149 / DSM 14245 / SRS30216).